A 132-amino-acid chain; its full sequence is Large ribosomal subunit protein uL14 (132 aa).

It belongs to the universal ribosomal protein uL14 family. As to quaternary structure, part of the 50S ribosomal subunit. Forms a cluster with proteins L3 and L24e, part of which may contact the 16S rRNA in 2 intersubunit bridges.

Binds to 23S rRNA. Forms part of two intersubunit bridges in the 70S ribosome. The sequence is that of Large ribosomal subunit protein uL14 from Methanocorpusculum labreanum (strain ATCC 43576 / DSM 4855 / Z).